The sequence spans 756 residues: Xylosyl- and glucuronyltransferase LARGE1 (756 aa).

Residues 1–10 (MLGICRGRRK) are Cytoplasmic-facing. Residues 11-31 (FLAASLTLLCIPAITWIYLFA) form a helical; Signal-anchor for type II membrane protein membrane-spanning segment. Residues 32-756 (GSFEDGKPVS…LKYLTAENNS (725 aa)) lie on the Lumenal side of the membrane. 2 disordered regions span residues 43 to 64 (SPLE…ERES) and 82 to 108 (QLSL…EEGT). The span at 44 to 58 (PLESQAHSPRYTASS) shows a compositional bias: polar residues. A coiled-coil region spans residues 53-95 (RYTASSQRERESLEVRVREVEEENRALRRQLSLAQGQSPAHHR). N-linked (GlcNAc...) asparagine glycosylation is found at asparagine 97, asparagine 122, and asparagine 148. Residues 138 to 413 (IHVAIVCAGY…FLEYDGNLLR (276 aa)) form a xylosyltransferase activity region. Mn(2+) is bound by residues aspartate 242 and aspartate 244. Asparagine 272 carries an N-linked (GlcNAc...) asparagine glycan. The glucuronyltransferase activity stretch occupies residues 414–756 (RELFGCPSET…LKYLTAENNS (343 aa)). Aspartate 563 and aspartate 565 together coordinate Mn(2+).

This sequence in the C-terminal section; belongs to the glycosyltransferase 49 family. It in the N-terminal section; belongs to the glycosyltransferase 8 family. As to quaternary structure, interacts with DAG1 (via the N-terminal domain of alpha-DAG1); the interaction increases binding of DAG1 to laminin. Interacts with B4GAT1. Requires Mn(2+) as cofactor. In terms of tissue distribution, ubiquitous. Highest expression in heart, diaphragm and brain, where it is especially found in cerebral cortex, hippocampus, and trigeminal ganglion.

The protein localises to the golgi apparatus membrane. The catalysed reaction is 3-O-[beta-D-GlcA-(1-&gt;3)-beta-D-Xyl-(1-&gt;4)-Rib-ol-P-Rib-ol-P-3-beta-D-GalNAc-(1-&gt;3)-beta-D-GlcNAc-(1-&gt;4)-(O-6-P-alpha-D-Man)]-Thr-[protein] + UDP-alpha-D-xylose = 3-O-[alpha-D-Xyl-(1-&gt;3)-beta-D-GlcA-(1-&gt;4)-beta-D-Xyl-(1-&gt;4)-Rib-ol-P-Rib-ol-P-3-beta-D-GalNAc-(1-&gt;3)-beta-D-GlcNAc-(1-&gt;4)-(O-6-P-alpha-D-Man)]-Thr-[protein] + UDP + H(+). The enzyme catalyses 3-O-{(1-&gt;[3)-alpha-D-Xyl-(1-&gt;3)-beta-D-GlcA-(1-&gt;](n)-4)-beta-D-Xyl-(1-&gt;4)-Rib-ol-P-Rib-ol-P-3-beta-D-GalNAc-(1-&gt;3)-beta-D-GlcNAc-(1-&gt;4)-O-6-P-alpha-D-Man}-L-Thr-[protein] + UDP-alpha-D-glucuronate = 3-O-{beta-D-GlcA-(1-&gt;[3)-alpha-D-Xyl-(1-&gt;3)-beta-D-GlcA-(1-&gt;](n)-4)-beta-D-Xyl-(1-&gt;4)-Rib-ol-P-Rib-ol-P-3-beta-D-GalNAc-(1-&gt;3)-beta-D-GlcNAc-(1-&gt;4)-O-6-P-alpha-D-Man}-L-Thr-[protein] + UDP + H(+). It carries out the reaction 3-O-{beta-D-GlcA-(1-&gt;[3)-alpha-D-Xyl-(1-&gt;3)-beta-D-GlcA-(1-&gt;](n)-4)-beta-D-Xyl-(1-&gt;4)-Rib-ol-P-Rib-ol-P-3-beta-D-GalNAc-(1-&gt;3)-beta-D-GlcNAc-(1-&gt;4)-O-6-P-alpha-D-Man}-L-Thr-[protein] + UDP-alpha-D-xylose = 3-O-{(1-&gt;[3)-alpha-D-Xyl-(1-&gt;3)-beta-D-GlcA-(1-&gt;](n+1)-4)-beta-D-Xyl-(1-&gt;4)-Rib-ol-P-Rib-ol-P-3-beta-D-GalNAc-(1-&gt;3)-beta-D-GlcNAc-(1-&gt;4)-O-6-P-alpha-D-Man}-L-Thr-[protein] + UDP + H(+). It participates in protein modification; protein glycosylation. Bifunctional glycosyltransferase with both alpha-1,3-xylosyltransferase and beta-1,3-glucuronyltransferase activities involved in the maturation of alpha-dystroglycan (DAG1) by glycosylation leading to DAG1 binding to laminin G-like domain-containing extracellular proteins with high affinity. Elongates the glucuronyl-beta-1,4-xylose-beta disaccharide primer structure initiated by B4GAT1 by adding repeating units [-3-Xylose-alpha-1,3-GlcA-beta-1-] to produce a heteropolysaccharide. Requires the phosphorylation of core M3 (O-mannosyl trisaccharide) by POMK to elongate the glucuronyl-beta-1,4-xylose-beta disaccharide primer. Plays a key role in skeletal muscle function and regeneration. This chain is Xylosyl- and glucuronyltransferase LARGE1, found in Mus musculus (Mouse).